The following is a 198-amino-acid chain: RxLR effector protein Htp1 (198 aa).

A signal peptide spans 1–23 (MRIHHPLTLAALCVVLHESLGAA). The RxLR motif lies at 46 to 49 (RHLR). Disordered regions lie at residues 48–101 (LRSD…TPMK) and 115–198 (TKNA…PTFD). N-linked (GlcNAc...) asparagine glycosylation occurs at Asn70. Over residues 70-91 (NNSQEQATTGNSVETNQVPSTE) the composition is skewed to polar residues. Over residues 126-137 (DDDDSDFSDDDV) the composition is skewed to acidic residues. Positions 173–191 (APTNAPTGTDAPTDAPTDA) are enriched in low complexity.

Belongs to the RxLR effector family. Interacts with the effector Htp3 within the host cells.

The protein localises to the secreted. It localises to the host cell. Effector involved in the disease saprolegniosis in salmonids and other freshwater fish, resulting in considerable economic losses in aquaculture. Within the host fish cells, Htp1 is involved in the uptake of the S.parasitica effector Htp3 at a neutral pH (pH 7.5) and its release from vesicles into host cytosol where it degrades nucleic acids. The sequence is that of RxLR effector protein Htp1 from Saprolegnia parasitica (strain CBS 223.65).